The sequence spans 95 residues: MNLKKVKRIIDMFFKEKNLNELTLAFKRPLIVSENEYNELVGRPNLSFVDKDPWVLSDEFVYYELSNTLVKLIIYYFKEKGFIHILEIDLFREKR.

This is an uncharacterized protein from Sulfolobus islandicus rod-shaped virus 1 (SIRV-1).